We begin with the raw amino-acid sequence, 328 residues long: MKPAMETAAEENTEQSQERKVNSRAEMEIGRYHWMYPGSKNHQYRPVPNLGDRAGPLSSPGCFECCIKCLGGVPYASLVATILCFSGVALFCGCGHVALAGTVAILEQHFSTNTSDHALLSEVIQLMQYVIYGIASFFFLYGIILLAEGFYTTSAVKELHGEFKTTACGRCISGMFVFLTYVLGVAWLGVFGFSAVPVFMFYNIWSTCEVIKSPQSNGTSGVEQICVDVRQYGIIPWNAFPGKICGSALENICNTNEFYMSYHLFIVACAGAGATVIALIHFLMILSSNWAYLKDASKMQAYQDIKAKEEQELQDIQSRSKEQLNSYT.

Positions M1 to N22 are disordered. The chain crosses the membrane as a helical span at residues G71–F91. N-linked (GlcNAc...) asparagine glycosylation occurs at N113. Helical transmembrane passes span V130–F150 and F176–V196. N217 is a glycosylation site (N-linked (GlcNAc...) asparagine). The chain crosses the membrane as a helical span at residues F265–I285. 3 positions are modified to phosphoserine: S318, S320, and S326.

It belongs to the myelin proteolipid protein family. As to quaternary structure, interacts with SERT. In terms of tissue distribution, widely expressed. In the brain, expressed in neurons and oligodendrocytes.

It is found in the membrane. The protein resides in the cell membrane. Its function is as follows. May be involved in neural development. Involved in regulation of osteoblast function and bone formation. Involved in matrix vesicle release by osteoblasts; this function seems to involve maintenance of the actin cytoskeleton. May be involved in cellular trafficking of SERT and thereby in regulation of serotonin uptake. In Mus musculus (Mouse), this protein is Neuronal membrane glycoprotein M6-b (Gpm6b).